We begin with the raw amino-acid sequence, 44 residues long: Photosystem I reaction center subunit IX (44 aa).

The chain crosses the membrane as a helical span at residues 7–27; the sequence is YLSVAPVISTLWFGSLAGLLI.

It belongs to the PsaJ family.

It is found in the plastid. Its subcellular location is the chloroplast thylakoid membrane. Functionally, may help in the organization of the PsaE and PsaF subunits. The protein is Photosystem I reaction center subunit IX of Ceratophyllum demersum (Rigid hornwort).